Consider the following 957-residue polypeptide: Valine--tRNA ligase (957 aa).

Positions Pro-42–His-52 match the 'HIGH' region motif. The 'KMSKS' region signature appears at Lys-554–Ser-558. Residue Lys-557 coordinates ATP. Residues Asp-890–Ala-956 are a coiled coil.

Belongs to the class-I aminoacyl-tRNA synthetase family. ValS type 1 subfamily. Monomer.

The protein resides in the cytoplasm. The enzyme catalyses tRNA(Val) + L-valine + ATP = L-valyl-tRNA(Val) + AMP + diphosphate. Functionally, catalyzes the attachment of valine to tRNA(Val). As ValRS can inadvertently accommodate and process structurally similar amino acids such as threonine, to avoid such errors, it has a 'posttransfer' editing activity that hydrolyzes mischarged Thr-tRNA(Val) in a tRNA-dependent manner. This Aliivibrio fischeri (strain ATCC 700601 / ES114) (Vibrio fischeri) protein is Valine--tRNA ligase.